An 82-amino-acid chain; its full sequence is Small ribosomal subunit protein bS16 (82 aa).

This sequence belongs to the bacterial ribosomal protein bS16 family.

This Glaesserella parasuis serovar 5 (strain SH0165) (Haemophilus parasuis) protein is Small ribosomal subunit protein bS16.